The following is a 308-amino-acid chain: Ribosomal RNA large subunit methyltransferase F (308 aa).

The protein belongs to the methyltransferase superfamily. METTL16/RlmF family.

The protein localises to the cytoplasm. The enzyme catalyses adenosine(1618) in 23S rRNA + S-adenosyl-L-methionine = N(6)-methyladenosine(1618) in 23S rRNA + S-adenosyl-L-homocysteine + H(+). Functionally, specifically methylates the adenine in position 1618 of 23S rRNA. This Escherichia coli O17:K52:H18 (strain UMN026 / ExPEC) protein is Ribosomal RNA large subunit methyltransferase F.